A 237-amino-acid polypeptide reads, in one-letter code: NAD-dependent protein deacylase (237 aa).

Positions 1-235 (MRVVVLSGAG…PGLLQRLPAL (235 aa)) constitute a Deacetylase sirtuin-type domain. 8-28 (GAGISAESDVPTFRDDKNGLW) provides a ligand contact to NAD(+). Residues Tyr-53 and Arg-56 each contribute to the substrate site. 86–89 (QNVD) serves as a coordination point for NAD(+). His-104 acts as the Proton acceptor in catalysis. Zn(2+) contacts are provided by Cys-112, Cys-115, Cys-138, and Cys-140. Residues 177 to 179 (GTS), 203 to 205 (NPE), and Ala-221 contribute to the NAD(+) site.

This sequence belongs to the sirtuin family. Class III subfamily. Zn(2+) is required as a cofactor.

The protein localises to the cytoplasm. The catalysed reaction is N(6)-acetyl-L-lysyl-[protein] + NAD(+) + H2O = 2''-O-acetyl-ADP-D-ribose + nicotinamide + L-lysyl-[protein]. The enzyme catalyses N(6)-succinyl-L-lysyl-[protein] + NAD(+) + H2O = 2''-O-succinyl-ADP-D-ribose + nicotinamide + L-lysyl-[protein]. Its function is as follows. NAD-dependent lysine deacetylase and desuccinylase that specifically removes acetyl and succinyl groups on target proteins. Modulates the activities of several proteins which are inactive in their acylated form. The sequence is that of NAD-dependent protein deacylase from Mycobacterium leprae (strain TN).